Here is an 86-residue protein sequence, read N- to C-terminus: Large ribosomal subunit protein bL28 (86 aa).

It belongs to the bacterial ribosomal protein bL28 family.

The polypeptide is Large ribosomal subunit protein bL28 (Phocaeicola vulgatus (strain ATCC 8482 / DSM 1447 / JCM 5826 / CCUG 4940 / NBRC 14291 / NCTC 11154) (Bacteroides vulgatus)).